Consider the following 337-residue polypeptide: Holliday junction branch migration complex subunit RuvB (337 aa).

The tract at residues 4 to 186 (ADRLIAADNP…FGIVQRLEYY (183 aa)) is large ATPase domain (RuvB-L). ATP-binding positions include I25, R26, G67, K70, T71, T72, 133-135 (EDY), R176, Y186, and R223. T71 is a Mg(2+) binding site. Residues 187–257 (KVDDLQYIVQ…IADKALNMLD (71 aa)) are small ATPAse domain (RuvB-S). Positions 260–337 (VCGFDYMDRK…LHFGIDRPDK (78 aa)) are head domain (RuvB-H). 2 residues coordinate DNA: R315 and R320.

The protein belongs to the RuvB family. In terms of assembly, homohexamer. Forms an RuvA(8)-RuvB(12)-Holliday junction (HJ) complex. HJ DNA is sandwiched between 2 RuvA tetramers; dsDNA enters through RuvA and exits via RuvB. An RuvB hexamer assembles on each DNA strand where it exits the tetramer. Each RuvB hexamer is contacted by two RuvA subunits (via domain III) on 2 adjacent RuvB subunits; this complex drives branch migration. In the full resolvosome a probable DNA-RuvA(4)-RuvB(12)-RuvC(2) complex forms which resolves the HJ.

The protein resides in the cytoplasm. The catalysed reaction is ATP + H2O = ADP + phosphate + H(+). Its function is as follows. The RuvA-RuvB-RuvC complex processes Holliday junction (HJ) DNA during genetic recombination and DNA repair, while the RuvA-RuvB complex plays an important role in the rescue of blocked DNA replication forks via replication fork reversal (RFR). RuvA specifically binds to HJ cruciform DNA, conferring on it an open structure. The RuvB hexamer acts as an ATP-dependent pump, pulling dsDNA into and through the RuvAB complex. RuvB forms 2 homohexamers on either side of HJ DNA bound by 1 or 2 RuvA tetramers; 4 subunits per hexamer contact DNA at a time. Coordinated motions by a converter formed by DNA-disengaged RuvB subunits stimulates ATP hydrolysis and nucleotide exchange. Immobilization of the converter enables RuvB to convert the ATP-contained energy into a lever motion, pulling 2 nucleotides of DNA out of the RuvA tetramer per ATP hydrolyzed, thus driving DNA branch migration. The RuvB motors rotate together with the DNA substrate, which together with the progressing nucleotide cycle form the mechanistic basis for DNA recombination by continuous HJ branch migration. Branch migration allows RuvC to scan DNA until it finds its consensus sequence, where it cleaves and resolves cruciform DNA. This chain is Holliday junction branch migration complex subunit RuvB, found in Aliivibrio salmonicida (strain LFI1238) (Vibrio salmonicida (strain LFI1238)).